The following is a 614-amino-acid chain: Chaperone protein HtpG (614 aa).

The tract at residues 1 to 324 (MSQIETKEFQ…SEELPLNISR (324 aa)) is a; substrate-binding. A b region spans residues 325–537 (ETMQDSALIA…SHYGTHSMQR (213 aa)). Residues 538–614 (MMQLMNRDLQ…LNEILEKALR (77 aa)) are c.

Belongs to the heat shock protein 90 family. As to quaternary structure, homodimer.

It is found in the cytoplasm. Molecular chaperone. Has ATPase activity. This chain is Chaperone protein HtpG, found in Desulfitobacterium hafniense (strain Y51).